Reading from the N-terminus, the 49-residue chain is Large ribosomal subunit protein bL33B (49 aa).

The protein belongs to the bacterial ribosomal protein bL33 family.

This Staphylococcus epidermidis (strain ATCC 12228 / FDA PCI 1200) protein is Large ribosomal subunit protein bL33B (rpmG2).